An 821-amino-acid polypeptide reads, in one-letter code: Centrosomal protein of 95 kDa (821 aa).

Disordered regions lie at residues 310–354 (TLCK…FPQK), 390–474 (ATGE…DTHH), and 514–550 (KEAF…SSKA). Composition is skewed to basic and acidic residues over residues 325-340 (ESSK…RSEN) and 390-410 (ATGE…HSAN). Basic residues predominate over residues 427 to 441 (RKPRPGFSMHRKAPY). Phosphoserine is present on residues S445, S447, and S449. Coiled-coil stretches lie at residues 578–627 (LTKM…VKKE) and 695–789 (LQIQ…DDDA).

It localises to the cytoplasm. The protein resides in the cytoskeleton. It is found in the microtubule organizing center. Its subcellular location is the centrosome. The protein localises to the spindle pole. This Rattus norvegicus (Rat) protein is Centrosomal protein of 95 kDa (Cep95).